A 139-amino-acid chain; its full sequence is Transcription antitermination protein NusB (139 aa).

Belongs to the NusB family.

Functionally, involved in transcription antitermination. Required for transcription of ribosomal RNA (rRNA) genes. Binds specifically to the boxA antiterminator sequence of the ribosomal RNA (rrn) operons. In Rubrobacter xylanophilus (strain DSM 9941 / JCM 11954 / NBRC 16129 / PRD-1), this protein is Transcription antitermination protein NusB.